Here is a 1066-residue protein sequence, read N- to C-terminus: Kinesin-like protein Klp61F (1066 aa).

The region spanning 19–356 (NIQVYVRVRP…LEYAHRAKNI (338 aa)) is the Kinesin motor domain. ATP is bound at residue 103–110 (GQTGTGKT). A coiled-coil region spans residues 362–462 (VNQKLTKKTV…KTEENLLNTK (101 aa)). Phosphothreonine is present on Thr520. Coiled-coil stretches lie at residues 540 to 569 (DRMQ…QLSQ), 639 to 738 (LMSK…QIKN), 808 to 875 (CSML…LITE), and 889 to 918 (DLVQ…ELVR). Thr933 bears the Phosphothreonine mark. Ser949 carries the post-translational modification Phosphoserine. Residues 990 to 1002 (ELSETETIMNSTP) are compositionally biased toward polar residues. 2 disordered regions span residues 990 to 1009 (ELSE…VDGV) and 1016 to 1066 (GTTR…ENVA). Residues 1033–1051 (GGKRSSSLSRSLTPSKTSP) show a composition bias toward low complexity. Ser1043 carries the post-translational modification Phosphoserine. Thr1045 carries the post-translational modification Phosphothreonine. Phosphoserine is present on residues Ser1050 and Ser1054.

It belongs to the TRAFAC class myosin-kinesin ATPase superfamily. Kinesin family. BimC subfamily. Homotetramer. Consists of two pairs of polypeptides associated by coiled-coil interactions to form two homodimers. The homodimers are linked by lateral interactions between their coiled-coil regions to form a bipolar homotetramer consisting of a central rod with two motor domains projecting from either end. Parallel coiled coils extend from each pair of motor heads, switch to two antiparallel coiled coils in the central region and then back to parallel coiled coils. Interacts with Wee1. Phosphorylation is required for localization to mitotic spindles. Phosphorylation of Thr-933 during mitosis controls association with the spindle apparatus. Phosphorylated in vitro by Wee1.

Its subcellular location is the cytoplasm. The protein localises to the cytoskeleton. It is found in the spindle. The protein resides in the spindle pole. Its function is as follows. Important role in mitotic dividing cells. Microtubule motor required for spindle body separation. Slow plus-end directed microtubule motor capable of cross-linking and sliding apart antiparallel microtubules, thereby pushing apart the associated spindle poles during spindle assembly and function. Forms cross-links between microtubules within interpolar microtubule bundles. Contributes to the length of the metaphase spindle, maintains the prometaphase spindle by antagonizing Ncd, drives anaphase B, and also contributes to normal chromosome congression, kinetochore spacing, and anaphase A rates. Displays microtubule-stimulated ATPase activity. Required for normal fusome organization. Required in non-mitotic cells for transport of secretory proteins from the Golgi complex to the cell surface. The protein is Kinesin-like protein Klp61F of Drosophila melanogaster (Fruit fly).